Here is a 354-residue protein sequence, read N- to C-terminus: uncharacterized protein (354 aa).

This sequence belongs to the band 7/mec-2 family.

The protein localises to the mitochondrion. This is an uncharacterized protein from Schizosaccharomyces pombe (strain 972 / ATCC 24843) (Fission yeast).